The chain runs to 86 residues: Class II hydrophobin 2 (86 aa).

Residues 1 to 15 (MQFFAVALFATSALA) form the signal peptide. Intrachain disulfides connect Cys-18–Cys-67, Cys-28–Cys-58, Cys-29–Cys-41, and Cys-68–Cys-79.

This sequence belongs to the cerato-ulmin hydrophobin family. Homodimer. Homodimers further self-assemble to form highly ordered films at water-air interfaces through intermolecular interactions.

The protein localises to the secreted. Its subcellular location is the spore wall. The protein resides in the cell wall. Aerial growth, conidiation, and dispersal of filamentous fungi in the environment rely upon a capability of their secreting small amphipathic proteins called hydrophobins (HPBs) with low sequence identity. Class I can self-assemble into an outermost layer of rodlet bundles on aerial cell surfaces, conferring cellular hydrophobicity that supports fungal growth, development and dispersal; whereas Class II form highly ordered films at water-air interfaces through intermolecular interactions but contribute nothing to the rodlet structure. Hbf2 is a class II hydrophobin that is involved in sporuration. The polypeptide is Class II hydrophobin 2 (Hypocrea jecorina (Trichoderma reesei)).